Consider the following 535-residue polypeptide: Thermosome subunit gamma (535 aa).

Belongs to the TCP-1 chaperonin family. As to quaternary structure, forms a Heterooligomeric complex of two stacked eight-membered rings.

Its function is as follows. Molecular chaperone; binds unfolded polypeptides in vitro, and has a weak ATPase activity. In Saccharolobus solfataricus (strain ATCC 35092 / DSM 1617 / JCM 11322 / P2) (Sulfolobus solfataricus), this protein is Thermosome subunit gamma (thsC).